The sequence spans 393 residues: 4-hydroxyphenylpyruvate dioxygenase (393 aa).

VOC domains follow at residues Ala17–Arg148 and Phe179–Lys339. The Fe cation site is built by His182, His267, and Glu350.

The protein belongs to the 4HPPD family. The cofactor is Fe cation. In terms of tissue distribution, expressed in the hypodermis and intestine.

The catalysed reaction is 3-(4-hydroxyphenyl)pyruvate + O2 = homogentisate + CO2. Its pathway is amino-acid degradation; L-phenylalanine degradation; acetoacetate and fumarate from L-phenylalanine: step 3/6. Its function is as follows. Key enzyme in the degradation of tyrosine. In Caenorhabditis elegans, this protein is 4-hydroxyphenylpyruvate dioxygenase.